The sequence spans 474 residues: MINFSLLTSIVLLASKVVGVSPSYNGLGLTPQMGWNNWNTFACNVSEDLLLSTVDRIAALGLRDIGYHYVILDDCWSDGRDSDGMLVPDSTKFPNGMKHVADYLHGKDFLFGMYSSAGEYTCAGYAGSLDHEEDDAAFFAKNEVDYLKYDNCYNRGQFGTPETSFNRYRAMSEALNKTERPIFYSLCNWGQDLTFYWGSGIANSWRISGDITAEFDRPDSRCPCDGDEYDCPYAGFHCSIMNILNKAAPMGQNAGVGGWNDLDCLEVGVGNLTDDEEKAHFSMWAIVKSAMVIGADVRNLKPSSFSIYSQASVLAINQDPAGAPAIRVWRRYVPETDQHGQGEVQLWSGPLDNGDRVVALLNGGAKERPMVAYLEDIFIDSFVGSEELSSTWNVYDLWANRIDDSTASQILVGNRTANGLLYNATQLSYADGLKANDTRLFGEKVGTIEPYGLLNVTVPAHGVGLFRLRRESRK.

The first 22 residues, 1–22, serve as a signal peptide directing secretion; it reads MINFSLLTSIVLLASKVVGVSP. Disulfide bonds link Cys-43–Cys-75 and Cys-122–Cys-152. Asn-44 carries N-linked (GlcNAc...) asparagine glycosylation. Substrate-binding residues include Asp-73, Asp-74, and Lys-148. Asp-150 acts as the Nucleophile in catalysis. A glycan (N-linked (GlcNAc...) asparagine) is linked at Asn-176. Arg-206 contributes to the substrate binding site. The Proton donor role is filled by Asp-210. Cystine bridges form between Cys-222–Cys-238 and Cys-224–Cys-231. Residue Gln-252 participates in substrate binding. Asn-271, Asn-414, Asn-423, Asn-436, and Asn-455 each carry an N-linked (GlcNAc...) asparagine glycan.

This sequence belongs to the glycosyl hydrolase 27 family. Homotetramer.

It is found in the secreted. The catalysed reaction is Hydrolysis of terminal, non-reducing alpha-D-galactose residues in alpha-D-galactosides, including galactose oligosaccharides, galactomannans and galactolipids.. This Torulaspora delbrueckii (Yeast) protein is Alpha-galactosidase (MEL).